The following is a 51-amino-acid chain: Large ribosomal subunit protein eL39 (51 aa).

Residues Met-1–Pro-22 form a disordered region.

This sequence belongs to the eukaryotic ribosomal protein eL39 family. In terms of assembly, interacts with YIH1.

This chain is Large ribosomal subunit protein eL39 (RPL39), found in Debaryomyces hansenii (strain ATCC 36239 / CBS 767 / BCRC 21394 / JCM 1990 / NBRC 0083 / IGC 2968) (Yeast).